Here is a 214-residue protein sequence, read N- to C-terminus: Orotate phosphoribosyltransferase (214 aa).

5-phospho-alpha-D-ribose 1-diphosphate is bound at residue Lys26. 34–35 is a binding site for orotate; sequence FF. Residues 72 to 73, Arg99, Lys100, Lys103, His105, and 124 to 132 contribute to the 5-phospho-alpha-D-ribose 1-diphosphate site; these read YK and DDVITAGTA. The orotate site is built by Thr128 and Arg156.

This sequence belongs to the purine/pyrimidine phosphoribosyltransferase family. PyrE subfamily. As to quaternary structure, homodimer. Mg(2+) is required as a cofactor.

It carries out the reaction orotidine 5'-phosphate + diphosphate = orotate + 5-phospho-alpha-D-ribose 1-diphosphate. The protein operates within pyrimidine metabolism; UMP biosynthesis via de novo pathway; UMP from orotate: step 1/2. In terms of biological role, catalyzes the transfer of a ribosyl phosphate group from 5-phosphoribose 1-diphosphate to orotate, leading to the formation of orotidine monophosphate (OMP). This Proteus mirabilis (strain HI4320) protein is Orotate phosphoribosyltransferase.